The sequence spans 548 residues: Synaptic vesicle 2-related protein (548 aa).

At 1–87 (MEEDLFQLRQ…GFGKFQWKLS (87 aa)) the chain is on the cytoplasmic side. Serine 25 and serine 31 each carry phosphoserine. Residues 88 to 108 (VLTGLAWMADAMEMMILSILA) traverse the membrane as a helical segment. The Vesicular portion of the chain corresponds to 109–122 (PQLHCEWRLPSWQV). A helical transmembrane segment spans residues 123-143 (ALLTSVVFVGMMSSSTLWGNI). Topologically, residues 144–156 (SDQYGRKTGLKIS) are cytoplasmic. A helical membrane pass occupies residues 157–177 (VLWTLYYGILSAFAPVYSWIL). Residues 178-180 (VLR) are Vesicular-facing. The chain crosses the membrane as a helical span at residues 181–201 (GLVGFGIGGVPQSVTLYAEFL). The Cytoplasmic portion of the chain corresponds to 202–209 (PMKARAKC). The helical transmembrane segment at 210–230 (ILLIEVFWAIGTVFEVVLAVF) threads the bilayer. Residues 231 to 238 (VMPSLGWR) are Vesicular-facing. The chain crosses the membrane as a helical span at residues 239-259 (WLLILSAVPLLLFAVLCFWLP). Over 260 to 316 (ESARYDVLSGNQEKAIATLKRIATENGAPMPLGKLIISRQEDRGKMRDLFTPHFRWT) the chain is Cytoplasmic. A helical membrane pass occupies residues 317–337 (TLLLWFIWFSNAFSYYGLVLL). Topologically, residues 338 to 373 (TTELFQAGDVCSISSRKKAVEAKCSLACEYLSEEDY) are vesicular. The helical transmembrane segment at 374 to 394 (MDLLWTTLSEFPGVLVTLWII) threads the bilayer. Over 395–401 (DRLGRKK) the chain is Cytoplasmic. Residues 402-422 (TMALCFVVFSFCSLLLFICVG) traverse the membrane as a helical segment. The Vesicular portion of the chain corresponds to 423 to 425 (RNM). Residues 426–446 (LTLLLFIARAFISGGFQAAYV) form a helical membrane-spanning segment. Residues 447–457 (YTPEVYPTATR) lie on the Cytoplasmic side of the membrane. The helical transmembrane segment at 458–478 (ALGLGTCSGMARVGALITPFI) threads the bilayer. At 479-489 (AQVMLESSVYL) the chain is on the vesicular side. Residues 490–510 (TLAVYSGCCLLAALASCFLPI) traverse the membrane as a helical segment. Topologically, residues 511–548 (ETKGRGLQESSHREWGQEMVGRGAHGTGVARSNSGSQE) are cytoplasmic. Positions 528 to 548 (EMVGRGAHGTGVARSNSGSQE) are disordered. Serine 542 carries the phosphoserine modification.

This sequence belongs to the major facilitator superfamily. In terms of tissue distribution, detected in brain and adrenal medulla.

The protein localises to the cytoplasmic vesicle. The protein resides in the secretory vesicle. It localises to the synaptic vesicle membrane. This is Synaptic vesicle 2-related protein (SVOP) from Bos taurus (Bovine).